A 168-amino-acid chain; its full sequence is Transcriptional regulator MraZ (168 aa).

2 consecutive SpoVT-AbrB domains span residues 8 to 51 (EYNQ…GGDR) and 90 to 140 (ALNM…KADT).

It belongs to the MraZ family. As to quaternary structure, forms oligomers.

Its subcellular location is the cytoplasm. It localises to the nucleoid. In Cereibacter sphaeroides (strain ATCC 17029 / ATH 2.4.9) (Rhodobacter sphaeroides), this protein is Transcriptional regulator MraZ.